The following is a 408-amino-acid chain: Epsin-3 (408 aa).

N-acetylserine is present on serine 2. In terms of domain architecture, ENTH spans 24 to 157 (NVVFNYTEME…SDDNKIRAER (134 aa)). Positions 162-182 (ETAKKYKGVAGGSASADGSLN) are disordered. Phosphoserine is present on residues serine 196, serine 198, serine 203, serine 212, and serine 223. 2 disordered regions span residues 199 to 322 (ADFD…ITPA) and 338 to 408 (TAKA…LLSF). A compositionally biased stretch (acidic residues) spans 201–210 (FDSDNEDNED). Residues 211–231 (GSFSQNGYNDNASRATSTPGQ) show a composition bias toward polar residues. The segment covering 249 to 263 (KPSKELIQEDEKKAD) has biased composition (basic and acidic residues). Positions 264–273 (EEEDDDDEFS) are enriched in acidic residues. Residues 279–317 (VPVTNPANSFNLLNTSPIEGMPATTSSMPFYNSSTTDQG) show a composition bias toward polar residues. Positions 338–361 (TAKASAEAPSAPKASQAKAAASNP) are enriched in low complexity. Polar residues-rich tracts occupy residues 362–371 (VSNSTTALST) and 388–398 (QQEQNTNNNHT). Residues 399–408 (SSKEIDLLSF) are compositionally biased toward basic and acidic residues.

As to quaternary structure, interacts with the clathrin adapter GGA2, and VPS27.

It localises to the cytoplasm. The protein resides in the golgi apparatus. Its subcellular location is the trans-Golgi network membrane. The protein localises to the cytoplasmic vesicle. It is found in the clathrin-coated vesicle membrane. Its function is as follows. Involved in the recruitment of clathrin to the Golgi network and endosomes to form clathrin coated vesicles. Plays a role in the trafficking of clathrin between the Golgi network and endosomes. Binds to membranes enriched in phosphatidylinositol-3,5-bisphosphate (PtdIns(3,5)P2) and, in association with VPS27, is involved in protein sorting at the multivesicular body (MVB). The sequence is that of Epsin-3 (ENT3) from Saccharomyces cerevisiae (strain ATCC 204508 / S288c) (Baker's yeast).